A 543-amino-acid polypeptide reads, in one-letter code: Chaperonin GroEL 1 (543 aa).

Residues 29–32, 86–90, G413, 479–481, and D495 contribute to the ATP site; these read TLGP, DGTTT, and NAA. Residues 524–543 are disordered; the sequence is PEPKDAAPAGVGGGGGDFDY. Gly residues predominate over residues 533-543; it reads GVGGGGGDFDY.

Belongs to the chaperonin (HSP60) family. Forms a cylinder of 14 subunits composed of two heptameric rings stacked back-to-back. Interacts with the co-chaperonin GroES.

It is found in the cytoplasm. The enzyme catalyses ATP + H2O + a folded polypeptide = ADP + phosphate + an unfolded polypeptide.. Its function is as follows. Together with its co-chaperonin GroES, plays an essential role in assisting protein folding. The GroEL-GroES system forms a nano-cage that allows encapsulation of the non-native substrate proteins and provides a physical environment optimized to promote and accelerate protein folding. The chain is Chaperonin GroEL 1 from Anabaena sp. (strain L31).